The sequence spans 328 residues: Lipoyl synthase (328 aa).

Residues Cys75, Cys80, Cys86, Cys101, Cys105, Cys108, and Ser315 each contribute to the [4Fe-4S] cluster site. Residues Phe87–Glu304 form the Radical SAM core domain.

Belongs to the radical SAM superfamily. Lipoyl synthase family. [4Fe-4S] cluster serves as cofactor.

The protein localises to the cytoplasm. It carries out the reaction [[Fe-S] cluster scaffold protein carrying a second [4Fe-4S](2+) cluster] + N(6)-octanoyl-L-lysyl-[protein] + 2 oxidized [2Fe-2S]-[ferredoxin] + 2 S-adenosyl-L-methionine + 4 H(+) = [[Fe-S] cluster scaffold protein] + N(6)-[(R)-dihydrolipoyl]-L-lysyl-[protein] + 4 Fe(3+) + 2 hydrogen sulfide + 2 5'-deoxyadenosine + 2 L-methionine + 2 reduced [2Fe-2S]-[ferredoxin]. It functions in the pathway protein modification; protein lipoylation via endogenous pathway; protein N(6)-(lipoyl)lysine from octanoyl-[acyl-carrier-protein]: step 2/2. Catalyzes the radical-mediated insertion of two sulfur atoms into the C-6 and C-8 positions of the octanoyl moiety bound to the lipoyl domains of lipoate-dependent enzymes, thereby converting the octanoylated domains into lipoylated derivatives. The sequence is that of Lipoyl synthase from Colwellia psychrerythraea (strain 34H / ATCC BAA-681) (Vibrio psychroerythus).